Reading from the N-terminus, the 189-residue chain is ATP synthase subunit b (189 aa).

The helical transmembrane segment at 23–43 (IEIVLSLVVFGLLLFAVWKFV) threads the bilayer.

The protein belongs to the ATPase B chain family. As to quaternary structure, F-type ATPases have 2 components, F(1) - the catalytic core - and F(0) - the membrane proton channel. F(1) has five subunits: alpha(3), beta(3), gamma(1), delta(1), epsilon(1). F(0) has three main subunits: a(1), b(2) and c(10-14). The alpha and beta chains form an alternating ring which encloses part of the gamma chain. F(1) is attached to F(0) by a central stalk formed by the gamma and epsilon chains, while a peripheral stalk is formed by the delta and b chains.

The protein resides in the cell membrane. Its function is as follows. F(1)F(0) ATP synthase produces ATP from ADP in the presence of a proton or sodium gradient. F-type ATPases consist of two structural domains, F(1) containing the extramembraneous catalytic core and F(0) containing the membrane proton channel, linked together by a central stalk and a peripheral stalk. During catalysis, ATP synthesis in the catalytic domain of F(1) is coupled via a rotary mechanism of the central stalk subunits to proton translocation. Component of the F(0) channel, it forms part of the peripheral stalk, linking F(1) to F(0). In Nocardioides sp. (strain ATCC BAA-499 / JS614), this protein is ATP synthase subunit b.